We begin with the raw amino-acid sequence, 374 residues long: Spore germination protein B3 (374 aa).

Residues 1-19 (MKTASKFSVMFFMLLALCG) form the signal peptide. Residue cysteine 20 is the site of N-palmitoyl cysteine attachment. Cysteine 20 carries S-diacylglycerol cysteine lipidation.

This sequence belongs to the GerABKC lipoprotein family.

The protein localises to the cell membrane. Functionally, involved in the response to the germinative mixture of L-asparagine, glucose, fructose and potassium ions (AGFK). Cannot stimulate germination in the absence of gerD and gerK gene products (fructose and glucose receptors respectively). This is Spore germination protein B3 (gerBC) from Bacillus subtilis (strain 168).